Here is a 507-residue protein sequence, read N- to C-terminus: F-box only protein 31 (507 aa).

The disordered stretch occupies residues 19-42 (RQQRRGPAETAAADSEADTDPEEE). Ser33 bears the Phosphoserine mark. Acidic residues predominate over residues 33 to 42 (SEADTDPEEE). Phosphothreonine is present on Thr37. The D box signature appears at 50 to 55 (RCSLLE). In terms of domain architecture, F-box spans 50–96 (RCSLLELPPELLVEIFASLPGTDLPSLAQVCSRFRRILHTDTIWRRR). Residues Cys192, His200, Cys216, and His222 each contribute to the Zn(2+) site. A Phosphoserine; by ATM modification is found at Ser264. A DDL motif motif is present at residues 283-285 (DDL). The disordered stretch occupies residues 364–421 (RQEQEAGEGPAPHREPAVKDPEGPPAKASKEAGPGAEAAEQSSTSGQGQPFVLPAGVS). Residues 374–385 (APHREPAVKDPE) show a composition bias toward basic and acidic residues. The residue at position 448 (Ser448) is a Phosphoserine.

Belongs to the FBXO31 family. Part of a SCF (SKP1-cullin-F-box) protein ligase complex SCF(FBXO31) composed of CUL1, SKP1, RBX1 and FBXO31. Interacts (when phosphorylated at Ser-33) with CDC20, promoting ubiquitination by the APC/C complex. Phosphorylation at Ser-264 by ATM following gamma-irradiation results in its stabilization. Phosphorylation at Ser-448 in absence of stress promotes its ubiquitination and degradation by the SCF(FBXO46) complex. Phosphorylation at Ser-33 by AKT1 promotes association with CDC20 and ubiquitination by the APC/C complex. In terms of processing, ubiquitinated by the SCF(FBXO46) complex in absence of stress, promoting its degradation. Ubiquitinated by the APC/C complex following phosphorylation at Ser-33, leading to its degradation by the proteasome.

The protein localises to the cytoplasm. It localises to the cytoskeleton. The protein resides in the microtubule organizing center. Its subcellular location is the centrosome. It functions in the pathway protein modification; protein ubiquitination. Functionally, substrate-recognition component of the SCF(FBXO31) protein ligase complex, which specifically mediates the ubiquitination of proteins amidated at their C-terminus in response to oxidative stress, leading to their degradation by the proteasome. FBXO31 specifically recognizes and binds C-terminal peptides bearing an amide: C-terminal amidation in response to oxidative stress takes place following protein fragmentation. The SCF(FBXO31) also plays a role in G1 arrest following DNA damage by mediating ubiquitination of phosphorylated cyclin-D1 (CCND1), promoting its degradation by the proteasome, resulting in G1 arrest. The SCF(FBXO31) complex is however not a major regulator of CCND1 stability during the G1/S transition. In response to genotoxic stress, the SCF(FBXO31) complex directs ubiquitination and degradation of phosphorylated MDM2, thereby promoting p53/TP53-mediated DNA damage response. SCF(FBXO31) complex is required for genomic integrity by catalyzing ubiquitination and degradation of cyclin-A (CCNA1 and/or CCNA2) during the G1 phase. In response to genotoxic stress, the SCF(FBXO31) complex directs ubiquitination and degradation of phosphorylated FBXO46 and MAP2K6. SCF(FBXO31) complex promotes ubiquitination and degradation of CDT1 during the G2 phase to prevent re-replication. The SCF(FBXO31) complex also mediates ubiquitination and degradation of DUSP6, OGT and PARD6A. In Rattus norvegicus (Rat), this protein is F-box only protein 31.